We begin with the raw amino-acid sequence, 360 residues long: UDP-N-acetylglucosamine--N-acetylmuramyl-(pentapeptide) pyrophosphoryl-undecaprenol N-acetylglucosamine transferase (360 aa).

UDP-N-acetyl-alpha-D-glucosamine is bound by residues 12 to 14 (TAG), serine 198, and glutamine 289.

This sequence belongs to the glycosyltransferase 28 family. MurG subfamily.

The protein localises to the cell membrane. The catalysed reaction is Mur2Ac(oyl-L-Ala-gamma-D-Glu-L-Lys-D-Ala-D-Ala)-di-trans,octa-cis-undecaprenyl diphosphate + UDP-N-acetyl-alpha-D-glucosamine = beta-D-GlcNAc-(1-&gt;4)-Mur2Ac(oyl-L-Ala-gamma-D-Glu-L-Lys-D-Ala-D-Ala)-di-trans,octa-cis-undecaprenyl diphosphate + UDP + H(+). The protein operates within cell wall biogenesis; peptidoglycan biosynthesis. Cell wall formation. Catalyzes the transfer of a GlcNAc subunit on undecaprenyl-pyrophosphoryl-MurNAc-pentapeptide (lipid intermediate I) to form undecaprenyl-pyrophosphoryl-MurNAc-(pentapeptide)GlcNAc (lipid intermediate II). The polypeptide is UDP-N-acetylglucosamine--N-acetylmuramyl-(pentapeptide) pyrophosphoryl-undecaprenol N-acetylglucosamine transferase (Streptococcus equi subsp. equi (strain 4047)).